The chain runs to 318 residues: MKPPGPMMNELLAIGHPEVMAERRRWLASLAEERRLSEKTVDAYERDTRQFLTFLTGHLAGPPRLSDICALRPADLRGFLAQRRKGGAGARTLGRGLAGLRSFLRYLERNGLANAAGAGAVRSPKQPKSLPKALTDREALKVVTADAQLAEEPWIAARNAAVLTLLYGCGLRIAEALDLTPADFSGPVTSLRVTGKGGKTRIVPMIAAAAEAVETYRKLCPYHIEPEEPIFRGARGAKLQPAIIQREMQKLRAALGLPDSATPHALRHSFATHLLAGGGDLRTIQELLGHASLSTTQVYTGVDSARLLEIYDRAHPRA.

The region spanning 17-108 (PEVMAERRRW…GLRSFLRYLE (92 aa)) is the Core-binding (CB) domain. In terms of domain architecture, Tyr recombinase spans 129–312 (SLPKALTDRE…DSARLLEIYD (184 aa)). Catalysis depends on residues Arg-172, Lys-196, His-264, Arg-267, and His-290. Tyr-299 (O-(3'-phospho-DNA)-tyrosine intermediate) is an active-site residue.

This sequence belongs to the 'phage' integrase family. XerC subfamily. In terms of assembly, forms a cyclic heterotetrameric complex composed of two molecules of XerC and two molecules of XerD.

The protein localises to the cytoplasm. Functionally, site-specific tyrosine recombinase, which acts by catalyzing the cutting and rejoining of the recombining DNA molecules. The XerC-XerD complex is essential to convert dimers of the bacterial chromosome into monomers to permit their segregation at cell division. It also contributes to the segregational stability of plasmids. The protein is Tyrosine recombinase XerC of Rhizobium meliloti (strain 1021) (Ensifer meliloti).